The following is a 430-amino-acid chain: Aspartate aminotransferase, mitochondrial (430 aa).

Residues 1–29 (MALLHSGRFLSGVAAAFHPGLAAAASARA) constitute a mitochondrion transit peptide. Threonine 48 is subject to Phosphothreonine. Position 59 is an N6-acetyllysine (lysine 59). Glycine 65 provides a ligand contact to substrate. An N6-acetyllysine; alternate modification is found at lysine 73. Lysine 73 bears the N6-succinyllysine; alternate mark. The residue at position 82 (lysine 82) is an N6-acetyllysine. N6-acetyllysine; alternate is present on lysine 90. Lysine 90 carries the N6-succinyllysine; alternate modification. Tyrosine 96 carries the 3'-nitrotyrosine; alternate modification. Tyrosine 96 bears the Phosphotyrosine; alternate mark. 2 positions are modified to N6-acetyllysine; alternate: lysine 107 and lysine 122. Residues lysine 107 and lysine 122 each carry the N6-succinyllysine; alternate modification. A Phosphoserine modification is found at serine 143. Lysine 159 bears the N6-acetyllysine; alternate mark. At lysine 159 the chain carries N6-succinyllysine; alternate. Tryptophan 162 lines the substrate pocket. Residue lysine 185 is modified to N6-acetyllysine; alternate. Lysine 185 carries the post-translational modification N6-succinyllysine; alternate. Asparagine 215 contacts substrate. The residue at position 227 (lysine 227) is an N6-succinyllysine. Position 234 is an N6-acetyllysine (lysine 234). An N6-acetyllysine; alternate mark is found at lysine 279 and lysine 296. Lysine 279 carries the post-translational modification N6-(pyridoxal phosphate)lysine; alternate. Lysine 296 carries the post-translational modification N6-succinyllysine; alternate. Lysine 302 is modified (N6-acetyllysine). An N6-acetyllysine; alternate modification is found at lysine 309. The residue at position 309 (lysine 309) is an N6-succinyllysine; alternate. Arginine 313 carries the post-translational modification Asymmetric dimethylarginine. Lysine 338 is modified (N6-acetyllysine; alternate). Lysine 338 carries the N6-succinyllysine; alternate modification. Residue lysine 345 is modified to N6-acetyllysine. Residue lysine 363 is modified to N6-acetyllysine; alternate. An N6-succinyllysine; alternate modification is found at lysine 363. Lysine 364 and lysine 387 each carry N6-acetyllysine. Lysine 396 and lysine 404 each carry N6-acetyllysine; alternate. An N6-succinyllysine; alternate mark is found at lysine 396 and lysine 404. A substrate-binding site is contributed by arginine 407.

It belongs to the class-I pyridoxal-phosphate-dependent aminotransferase family. In terms of assembly, homodimer. Pyridoxal 5'-phosphate is required as a cofactor.

The protein localises to the mitochondrion matrix. The protein resides in the cell membrane. The enzyme catalyses L-aspartate + 2-oxoglutarate = oxaloacetate + L-glutamate. It carries out the reaction L-kynurenine + 2-oxoglutarate = 4-(2-aminophenyl)-2,4-dioxobutanoate + L-glutamate. Its function is as follows. Catalyzes the irreversible transamination of the L-tryptophan metabolite L-kynurenine to form kynurenic acid (KA). As a member of the malate-aspartate shuttle, it has a key role in the intracellular NAD(H) redox balance. Is important for metabolite exchange between mitochondria and cytosol, and for amino acid metabolism. Facilitates cellular uptake of long-chain free fatty acids. This Bos taurus (Bovine) protein is Aspartate aminotransferase, mitochondrial (GOT2).